The primary structure comprises 247 residues: MNFEKVVERICDFIRGVVSSSGSTGVVLGLSGGVDSATVAYLCVRALGSERVFALIMPETGVTPEQDVEDAINVAESLGMEYKLIEINDIVRVFKEKAGEGSKIAEANLKPRIRMVLNYYHANSMNRLVAGTGNKSELMVGYFTKYGDGGVDFLPIGDLYKTEVFQLAAYLGVPRRIIEKKPSARLWPGQTDEEEMGISYAELDEILKLIEKGERRDDEKFRRVVQMVERSRHKREMPPVARVRDLL.

29-36 (GLSGGVDS) serves as a coordination point for ATP. Residue D35 participates in Mg(2+) binding. R112 contributes to the deamido-NAD(+) binding site. T132 contributes to the ATP binding site. E137 contacts Mg(2+). Deamido-NAD(+) is bound by residues K145 and D152. ATP is bound by residues K161 and S183. Position 233-234 (233-234 (HK)) interacts with deamido-NAD(+).

The protein belongs to the NAD synthetase family. In terms of assembly, homodimer.

The catalysed reaction is deamido-NAD(+) + NH4(+) + ATP = AMP + diphosphate + NAD(+) + H(+). It participates in cofactor biosynthesis; NAD(+) biosynthesis; NAD(+) from deamido-NAD(+) (ammonia route): step 1/1. Its function is as follows. Catalyzes the ATP-dependent amidation of deamido-NAD to form NAD. Uses ammonia as a nitrogen source. The sequence is that of NH(3)-dependent NAD(+) synthetase from Archaeoglobus fulgidus (strain ATCC 49558 / DSM 4304 / JCM 9628 / NBRC 100126 / VC-16).